Consider the following 330-residue polypeptide: D-lactate dehydrogenase (330 aa).

Residues 156 to 157, Asp-176, 206 to 207, 233 to 235, and Asp-259 each bind NAD(+); these read RI, VP, and AAR. The active site involves Arg-235. Residue Glu-264 is part of the active site. The active-site Proton donor is His-296.

It belongs to the D-isomer specific 2-hydroxyacid dehydrogenase family.

It carries out the reaction (R)-lactate + NAD(+) = pyruvate + NADH + H(+). The chain is D-lactate dehydrogenase (ldhD) from Staphylococcus aureus.